The chain runs to 232 residues: Ribose-5-phosphate isomerase A (232 aa).

Substrate contacts are provided by residues 28–31 (TGST), 83–86 (DGAD), and 96–99 (KGGG). E105 serves as the catalytic Proton acceptor. K123 serves as a coordination point for substrate.

It belongs to the ribose 5-phosphate isomerase family. As to quaternary structure, homodimer.

It carries out the reaction aldehydo-D-ribose 5-phosphate = D-ribulose 5-phosphate. It participates in carbohydrate degradation; pentose phosphate pathway; D-ribose 5-phosphate from D-ribulose 5-phosphate (non-oxidative stage): step 1/1. Its function is as follows. Catalyzes the reversible conversion of ribose-5-phosphate to ribulose 5-phosphate. This Rhodopseudomonas palustris (strain BisB5) protein is Ribose-5-phosphate isomerase A.